The sequence spans 142 residues: Translation initiation factor 2 subunit beta (142 aa).

This sequence belongs to the eIF-2-beta/eIF-5 family. In terms of assembly, heterotrimer composed of an alpha, a beta and a gamma chain.

EIF-2 functions in the early steps of protein synthesis by forming a ternary complex with GTP and initiator tRNA. The protein is Translation initiation factor 2 subunit beta of Methanosphaera stadtmanae (strain ATCC 43021 / DSM 3091 / JCM 11832 / MCB-3).